A 378-amino-acid chain; its full sequence is Glutamate 5-kinase (378 aa).

Residue K14 coordinates ATP. Positions 54, 141, and 153 each coordinate substrate. ATP is bound at residue 173 to 174; sequence SD. The PUA domain maps to 279–356; that stretch reads AGRLTVDAGA…DEISEILGYD (78 aa).

The protein belongs to the glutamate 5-kinase family.

Its subcellular location is the cytoplasm. It catalyses the reaction L-glutamate + ATP = L-glutamyl 5-phosphate + ADP. It functions in the pathway amino-acid biosynthesis; L-proline biosynthesis; L-glutamate 5-semialdehyde from L-glutamate: step 1/2. In terms of biological role, catalyzes the transfer of a phosphate group to glutamate to form L-glutamate 5-phosphate. In Brucella anthropi (strain ATCC 49188 / DSM 6882 / CCUG 24695 / JCM 21032 / LMG 3331 / NBRC 15819 / NCTC 12168 / Alc 37) (Ochrobactrum anthropi), this protein is Glutamate 5-kinase.